A 436-amino-acid chain; its full sequence is Phosphomethylpyrimidine synthase (436 aa).

Residues asparagine 69, methionine 98, tyrosine 127, histidine 163, serine 185–glycine 187, aspartate 226–arginine 229, and glutamate 265 each bind substrate. Histidine 269 is a binding site for Zn(2+). Position 292 (tyrosine 292) interacts with substrate. Histidine 333 is a Zn(2+) binding site. The [4Fe-4S] cluster site is built by cysteine 409, cysteine 412, and cysteine 416.

The protein belongs to the ThiC family. It depends on [4Fe-4S] cluster as a cofactor.

The catalysed reaction is 5-amino-1-(5-phospho-beta-D-ribosyl)imidazole + S-adenosyl-L-methionine = 4-amino-2-methyl-5-(phosphooxymethyl)pyrimidine + CO + 5'-deoxyadenosine + formate + L-methionine + 3 H(+). Its pathway is cofactor biosynthesis; thiamine diphosphate biosynthesis. Catalyzes the synthesis of the hydroxymethylpyrimidine phosphate (HMP-P) moiety of thiamine from aminoimidazole ribotide (AIR) in a radical S-adenosyl-L-methionine (SAM)-dependent reaction. The chain is Phosphomethylpyrimidine synthase from Clostridium perfringens (strain ATCC 13124 / DSM 756 / JCM 1290 / NCIMB 6125 / NCTC 8237 / Type A).